The chain runs to 395 residues: Phosphoglycerate kinase (395 aa).

Substrate contacts are provided by residues 21-23 (DFN), Arg36, 59-62 (HLGR), Arg120, and Arg153. Residues Lys203, Gly294, Glu325, and 351 to 354 (GGDS) contribute to the ATP site.

The protein belongs to the phosphoglycerate kinase family. As to quaternary structure, monomer.

The protein resides in the cytoplasm. It carries out the reaction (2R)-3-phosphoglycerate + ATP = (2R)-3-phospho-glyceroyl phosphate + ADP. The protein operates within carbohydrate degradation; glycolysis; pyruvate from D-glyceraldehyde 3-phosphate: step 2/5. This chain is Phosphoglycerate kinase, found in Finegoldia magna (strain ATCC 29328 / DSM 20472 / WAL 2508) (Peptostreptococcus magnus).